The sequence spans 321 residues: Lipoyl synthase (321 aa).

7 residues coordinate [4Fe-4S] cluster: Cys-68, Cys-73, Cys-79, Cys-94, Cys-98, Cys-101, and Ser-308. Positions 80–297 constitute a Radical SAM core domain; that stretch reads FNHGTATFMI…KAEAMAMGFT (218 aa).

This sequence belongs to the radical SAM superfamily. Lipoyl synthase family. It depends on [4Fe-4S] cluster as a cofactor.

It localises to the cytoplasm. The enzyme catalyses [[Fe-S] cluster scaffold protein carrying a second [4Fe-4S](2+) cluster] + N(6)-octanoyl-L-lysyl-[protein] + 2 oxidized [2Fe-2S]-[ferredoxin] + 2 S-adenosyl-L-methionine + 4 H(+) = [[Fe-S] cluster scaffold protein] + N(6)-[(R)-dihydrolipoyl]-L-lysyl-[protein] + 4 Fe(3+) + 2 hydrogen sulfide + 2 5'-deoxyadenosine + 2 L-methionine + 2 reduced [2Fe-2S]-[ferredoxin]. The protein operates within protein modification; protein lipoylation via endogenous pathway; protein N(6)-(lipoyl)lysine from octanoyl-[acyl-carrier-protein]: step 2/2. Catalyzes the radical-mediated insertion of two sulfur atoms into the C-6 and C-8 positions of the octanoyl moiety bound to the lipoyl domains of lipoate-dependent enzymes, thereby converting the octanoylated domains into lipoylated derivatives. In Pectobacterium atrosepticum (strain SCRI 1043 / ATCC BAA-672) (Erwinia carotovora subsp. atroseptica), this protein is Lipoyl synthase.